A 29-amino-acid polypeptide reads, in one-letter code: Thrombin-like enzyme collinein-2 (29 aa).

Monomer. As to expression, expressed by the venom gland.

It is found in the secreted. Its function is as follows. Thrombin-like snake venom serine protease. The polypeptide is Thrombin-like enzyme collinein-2 (Crotalus durissus collilineatus (Brazilian rattlesnake)).